An 87-amino-acid polypeptide reads, in one-letter code: Phytosulfokines 2 (87 aa).

Residues 1–22 (MANVSALLTIALLLCSTLMCTA) form the signal peptide. A propeptide spanning residues 23 to 77 (RPEPAISISITTAADPCNMEKKIEGKLDDMHMVDENCGADDEDCLMRRTLVAHTD) is cleaved from the precursor. Sulfotyrosine occurs at positions 78 and 80. The propeptide occupies 83–87 (KKKHP).

The protein belongs to the phytosulfokine family. Sulfation is important for activity and for the binding to a putative membrane receptor. Post-translationally, PSK-beta is an enzymatic derivative of PSK-alpha. Expressed in stems, roots and leaves.

It is found in the secreted. Promotes plant cell differentiation, organogenesis and somatic embryogenesis as well as cell proliferation. This Arabidopsis thaliana (Mouse-ear cress) protein is Phytosulfokines 2 (PSK2).